A 136-amino-acid polypeptide reads, in one-letter code: Small ribosomal subunit protein eS19 (136 aa).

The residue at position 23 (K23) is an N6-acetyllysine. Position 67 is an omega-N-methylarginine (R67). An N6-acetyllysine mark is found at K111 and K115. Residues 116–136 are disordered; it reads DQDGGRKLTPQGQRDLDRIAG.

It belongs to the eukaryotic ribosomal protein eS19 family. In terms of assembly, component of the small ribosomal subunit. Part of the small subunit (SSU) processome, composed of more than 70 proteins and the RNA chaperone small nucleolar RNA (snoRNA) U3. Interacts with RPS19BP1; the interaction is direct and mediates the integration of RPS19 in state post-A1. Interacts with RPS19BP1.

It is found in the cytoplasm. The protein localises to the nucleus. The protein resides in the nucleolus. Component of the small ribosomal subunit. The ribosome is a large ribonucleoprotein complex responsible for the synthesis of proteins in the cell. Required for pre-rRNA processing and maturation of 40S ribosomal subunits. Part of the small subunit (SSU) processome, first precursor of the small eukaryotic ribosomal subunit. During the assembly of the SSU processome in the nucleolus, many ribosome biogenesis factors, an RNA chaperone and ribosomal proteins associate with the nascent pre-rRNA and work in concert to generate RNA folding, modifications, rearrangements and cleavage as well as targeted degradation of pre-ribosomal RNA by the RNA exosome. The polypeptide is Small ribosomal subunit protein eS19 (RPS19) (Sus scrofa (Pig)).